The following is a 566-amino-acid chain: Acetyl-coenzyme A carboxylase carboxyl transferase subunits beta/alpha (566 aa).

Positions 1-243 (MNPTTPRGGQ…QTAEFLLRHG (243 aa)) are acetyl-coenzyme A carboxylase carboxyl transferase subunit beta. The CoA carboxyltransferase N-terminal domain maps to 11 to 280 (LWSRCGGCAS…PVGAGHESEC (270 aa)). The segment at 11-534 (LWSRCGGCAS…REAVLAHLVP (524 aa)) is carboxyltransferase. 4 residues coordinate Zn(2+): Cys15, Cys18, Cys34, and Cys37. The acetyl-coenzyme A carboxylase carboxyl transferase subunit alpha stretch occupies residues 244–557 (QVDLVVPRHA…RRRFRRFGAA (314 aa)). Residues 268 to 295 (GREPVGAGHESECPPVDGSSTQERGADK) form a disordered region. In terms of domain architecture, CoA carboxyltransferase C-terminal spans 282 to 534 (PVDGSSTQER…REAVLAHLVP (253 aa)).

This sequence in the N-terminal section; belongs to the AccD/PCCB family. The protein in the C-terminal section; belongs to the AccA family. Acetyl-CoA carboxylase is a heterotetramer composed of biotin carboxyl carrier protein (AccB), biotin carboxylase (AccC) and two subunits of ACCase subunit beta/alpha. It depends on Zn(2+) as a cofactor.

It localises to the cytoplasm. The enzyme catalyses N(6)-carboxybiotinyl-L-lysyl-[protein] + acetyl-CoA = N(6)-biotinyl-L-lysyl-[protein] + malonyl-CoA. The protein operates within lipid metabolism; malonyl-CoA biosynthesis; malonyl-CoA from acetyl-CoA: step 1/1. Functionally, component of the acetyl coenzyme A carboxylase (ACC) complex. Biotin carboxylase (BC) catalyzes the carboxylation of biotin on its carrier protein (BCCP) and then the CO(2) group is transferred by the transcarboxylase to acetyl-CoA to form malonyl-CoA. In Salinispora tropica (strain ATCC BAA-916 / DSM 44818 / JCM 13857 / NBRC 105044 / CNB-440), this protein is Acetyl-coenzyme A carboxylase carboxyl transferase subunits beta/alpha (accD).